The following is a 262-amino-acid chain: Granzyme A (262 aa).

An N-terminal signal peptide occupies residues 1–26 (MRNSYRFLASSLSVVVSLLLIPEDVC). The propeptide at 27-28 (EK) is activation peptide. Positions 29 to 259 (IIGGNEVTPH…HLNWIIMTIK (231 aa)) constitute a Peptidase S1 domain. An intrachain disulfide couples Cys54 to Cys70. Catalysis depends on charge relay system residues His69 and Asp114. Cystine bridges form between Cys148/Cys218, Cys179/Cys197, and Cys208/Cys234. A glycan (N-linked (GlcNAc...) asparagine) is linked at Asn170. The Charge relay system role is filled by Ser212.

The protein belongs to the peptidase S1 family. Granzyme subfamily. In terms of assembly, homodimer; disulfide-linked. Interacts with APEX1.

It localises to the secreted. Its subcellular location is the cytoplasmic granule. The enzyme catalyses Hydrolysis of proteins, including fibronectin, type IV collagen and nucleolin. Preferential cleavage: -Arg-|-Xaa-, -Lys-|-Xaa- &gt;&gt; -Phe-|-Xaa- in small molecule substrates.. Abundant protease in the cytosolic granules of cytotoxic T-cells and NK-cells which activates caspase-independent pyroptosis when delivered into the target cell through the immunological synapse. It cleaves after Lys or Arg. Once delivered into the target cell, acts by catalyzing cleavage of gasdermin-B (GSDMB), releasing the pore-forming moiety of GSDMB, thereby triggering pyroptosis and target cell death. Cleaves APEX1 after 'Lys-31' and destroys its oxidative repair activity. Cleaves the nucleosome assembly protein SET after 'Lys-189', which disrupts its nucleosome assembly activity and allows the SET complex to translocate into the nucleus to nick and degrade the DNA. This chain is Granzyme A, found in Homo sapiens (Human).